A 525-amino-acid polypeptide reads, in one-letter code: cAMP-dependent protein kinase regulatory subunit (525 aa).

The dimerization and phosphorylation stretch occupies residues 28-213; it reads QFCANWFNSK…RIRGSIGNNL (186 aa). 2 disordered regions span residues 114-146 and 170-196; these read MDAS…SSLG and SVSA…TVIP. The span at 124 to 146 shows a compositional bias: low complexity; the sequence is PAPATPAAPAAPAAPAAPFSSLG. Ser-170 is modified (phosphoserine; by autocatalysis). Residues 214-345 and 348-472 each bind a nucleoside 3',5'-cyclic phosphate; these read LFRN…FLMD and LFER…TYGD. The 3',5'-cyclic AMP site is built by Glu-295, Arg-304, and Glu-417. The tract at residues 497–525 is disordered; sequence SGADTSFPHPMDSSAKPGEGAWSAPNPFA.

This sequence belongs to the cAMP-dependent kinase regulatory chain family. In terms of assembly, tetramer, composed of 2 regulatory (R) and 2 catalytic (C) subunits. In the presence of cAMP it dissociates into 2 active monomeric C subunits and an R dimer.

The polypeptide is cAMP-dependent protein kinase regulatory subunit (PKAR) (Mycosarcoma maydis (Corn smut fungus)).